The sequence spans 214 residues: MNFLLSWVHWSLALLLYLHHAKWSQAAPMAGGEHKPHEVVKFMDVYQRSYCRPIETLVDIFQEYPDEIEYIFKPSCVPLMRCGGCCNDEGLECVPTEEFNITMQIMRIKPHQGQHIGEMSFLQHSKCECRPKKDRARQEKKSIRGKGKGQKRKRKKSRYKPWSVPCGPCSERRKHLFVQDPQTCKCSCKNTDSRCKARQLELNERTCRCDKPRR.

The N-terminal stretch at 1 to 26 is a signal peptide; it reads MNFLLSWVHWSLALLLYLHHAKWSQA. 3 disulfides stabilise this stretch: C51–C93, C82–C127, and C86–C129. N-linked (GlcNAc...) asparagine glycosylation is present at N100. Positions 131–142 are enriched in basic and acidic residues; it reads PKKDRARQEKKS. The tract at residues 131–162 is disordered; it reads PKKDRARQEKKSIRGKGKGQKRKRKKSRYKPW. Residues 143–159 are compositionally biased toward basic residues; it reads IRGKGKGQKRKRKKSRY.

This sequence belongs to the PDGF/VEGF growth factor family. As to quaternary structure, homodimer; disulfide-linked. Also found as heterodimer with PGF. Interacts with NRP1. Interacts with BSG. Interacts with CD82; this interaction inhibits VEGFA-mediated signaling pathway.

Its subcellular location is the secreted. In terms of biological role, growth factor active in angiogenesis, vasculogenesis and endothelial cell growth. Induces endothelial cell proliferation, promotes cell migration, inhibits apoptosis and induces permeabilization of blood vessels. Binds to the FLT1/VEGFR1 and KDR/VEGFR2 receptors, heparan sulfate and heparin. Binding to NRP1 receptor initiates a signaling pathway needed for motor neuron axon guidance and cell body migration, including for the caudal migration of facial motor neurons from rhombomere 4 to rhombomere 6 during embryonic development. Also binds the DEAR/FBXW7-AS1 receptor. This chain is Vascular endothelial growth factor A (VEGFA), found in Canis lupus familiaris (Dog).